Here is a 366-residue protein sequence, read N- to C-terminus: Adenine DNA glycosylase (366 aa).

30 to 31 (WR) contacts DNA. Catalysis depends on glutamate 43, which acts as the Proton donor/acceptor. DNA-binding positions include 48-49 (QT), 86-88 (LGY), tyrosine 126, and glutamate 188. The 29-residue stretch at 105–133 (RYGGKVPDDPDEFSRLKGVGPYTVGAVLS) folds into the HhH domain. 4 residues coordinate [4Fe-4S] cluster: cysteine 198, cysteine 205, cysteine 208, and cysteine 214. Position 308 (serine 308) interacts with DNA.

Belongs to the Nth/MutY family. [4Fe-4S] cluster serves as cofactor.

It carries out the reaction Hydrolyzes free adenine bases from 7,8-dihydro-8-oxoguanine:adenine mismatched double-stranded DNA, leaving an apurinic site.. Its function is as follows. Base excision repair (BER) glycosylase that initiates repair of A:oxoG to C:G by removing the inappropriately paired adenine base from the DNA backbone, generating an abasic site product. 8-oxoguanine (oxoG) is a genotoxic DNA lesion resulting from oxidation of guanine; this residue is misread by replicative DNA polymerases, that insert adenine instead of cytosine opposite the oxidized damaged base. Shows a powerful dicrimination of A versus C, since it does not cleave cytosine in oxoG:C pairs. May also be able to remove adenine from A:G mispairs, although this activity may not be physiologically relevant. The polypeptide is Adenine DNA glycosylase (Geobacillus stearothermophilus (Bacillus stearothermophilus)).